A 592-amino-acid chain; its full sequence is MITRMSSLFLHTLRDDPADAELASHKLLVRAGYIRRVAPGVYSWLPMGLRVLRKVENVVRREMDAIGGQELMFPALLPKEPYEVTRRWDEYGPELFRLKDRKEADYLLGPTHEELFTWLVKGELNSYKDFPKVLYQIQTKYRDEARPRAGILRGREFVMKDSYSFNMTDEGLDESYRLHRKAYQRIFDALGIEYVICYATSGAMGGSASEEFLAVAADGEDTFVRSTESDYAANVEAVVSIPPAEESVEDKPEAVSHESPGADTIETLVEWANEAGLTVDGAPVTAKDTLKCIVCKVTRPGEDEDGNPYAPELTGVLVPGDREVDMKRLEASLEPAVVELADDEDFKKYPFLVKGFVGPRTFADNDLRMLADPRVVKGTAWITGADEKDRHYSNLVAGRDFTPDGYVEAAEVREGDPSPDGKGVLTLSRGIEIGHIFQLGRKYTEAFDVQILDENGRRTVPTMGSYGIGVSRLLAVVAEQMHDEKGLRWPRSIAPYDVHVVIANKDEAAGEAARELAEALSDAGLEVLFDDRPKVSPGVKFKDSELLGMPQVVVVGRGFAEGKVELRDRLNDERSEIDYADAVDVITKAARA.

Belongs to the class-II aminoacyl-tRNA synthetase family. ProS type 1 subfamily. In terms of assembly, homodimer.

It is found in the cytoplasm. It catalyses the reaction tRNA(Pro) + L-proline + ATP = L-prolyl-tRNA(Pro) + AMP + diphosphate. In terms of biological role, catalyzes the attachment of proline to tRNA(Pro) in a two-step reaction: proline is first activated by ATP to form Pro-AMP and then transferred to the acceptor end of tRNA(Pro). As ProRS can inadvertently accommodate and process non-cognate amino acids such as alanine and cysteine, to avoid such errors it has two additional distinct editing activities against alanine. One activity is designated as 'pretransfer' editing and involves the tRNA(Pro)-independent hydrolysis of activated Ala-AMP. The other activity is designated 'posttransfer' editing and involves deacylation of mischarged Ala-tRNA(Pro). The misacylated Cys-tRNA(Pro) is not edited by ProRS. This is Proline--tRNA ligase from Corynebacterium urealyticum (strain ATCC 43042 / DSM 7109).